We begin with the raw amino-acid sequence, 221 residues long: Ribosomal RNA small subunit methyltransferase G (221 aa).

S-adenosyl-L-methionine contacts are provided by residues Gly83, Phe88, 132-133 (LE), and Arg146.

This sequence belongs to the methyltransferase superfamily. RNA methyltransferase RsmG family.

The protein localises to the cytoplasm. The catalysed reaction is guanosine(527) in 16S rRNA + S-adenosyl-L-methionine = N(7)-methylguanosine(527) in 16S rRNA + S-adenosyl-L-homocysteine. Specifically methylates the N7 position of guanine in position 527 of 16S rRNA. This chain is Ribosomal RNA small subunit methyltransferase G, found in Zymomonas mobilis subsp. mobilis (strain ATCC 31821 / ZM4 / CP4).